Here is an 81-residue protein sequence, read N- to C-terminus: Salivary thrombin inhibitor anophelin (81 aa).

The N-terminal stretch at 1–22 is a signal peptide; the sequence is MANKLFLISLLCVVLVAKIAQA. N45 carries an N-linked (GlcNAc...) asparagine glycan. The interval 70–73 is blocks active site cleft of host thrombin in a reverse direction compared to substrates; sequence DPGR.

It belongs to the anophelin family. Interacts with human F2 (thrombin); the interaction results in thrombin inhibition.

The protein resides in the secreted. Functionally, salivary protein with anticoagulant activity that inhibits host thrombin (F2). This is Salivary thrombin inhibitor anophelin from Anopheles darlingi (Mosquito).